The chain runs to 125 residues: Protein ApaG (125 aa).

Positions 1 to 125 constitute an ApaG domain; sequence MFTSSKVAIQ…FRLAIPTLIN (125 aa).

The polypeptide is Protein ApaG (Proteus mirabilis (strain HI4320)).